The sequence spans 140 residues: MAASWGQVLALVLVAALWGGTQPLLKRASSGLEQVRERTWAWQLLQEIKALFGNTEYLMPFLLNQSGSLLYYLTLASTDLTLAVPICNSLAIVFTLIVGKVLGEDIGGKEAVAGMVLTITGITVCITSSVSKTQGQPSHS.

3 helical membrane-spanning segments follow: residues 1-21 (MAASWGQVLALVLVAALWGGT), 82-102 (LAVPICNSLAIVFTLIVGKVL), and 111-131 (AVAGMVLTITGITVCITSSVS).

It belongs to the TMEM234 family.

It localises to the membrane. The chain is Transmembrane protein 234 (Tmem234) from Mus musculus (Mouse).